Here is a 528-residue protein sequence, read N- to C-terminus: Ceramide glucosyltransferase (528 aa).

Residues 1–6 are Lumenal-facing; that stretch reads MYSFIE. The helical transmembrane segment at 7 to 27 threads the bilayer; it reads CIAGALFVLGCVVVTLVVIGV. Residues 28–369 are Cytoplasmic-facing; sequence RALLYNFRNR…TVLSATILEP (342 aa). Asp94 is a short sequence motif (D1). Position 154 (Asp154) is a short sequence motif, D2. A short sequence motif (D3) is located at residue Asp308. The active-site Proton acceptor is Asp308. The (Q/R)XXRW motif lies at 349-353; that stretch reads RRSRW. The chain crosses the membrane as a helical span at residues 370–390; that stretch reads FTECFLFATYMSLAMTTIPVL. Over 391-402 the chain is Lumenal; that stretch reads SQNLGIPKTWNA. A helical membrane pass occupies residues 403–423; the sequence is TAIAWFTITTLWMLIDYIGYL. The Cytoplasmic segment spans residues 424 to 457; the sequence is RLHSGVTMEVDEHTPYFAKGFKNTGGIKRRPFLE. Residues 458–478 traverse the membrane as a helical segment; sequence FLAAWIGREGLAFPVWAYAVV. Over 479–528 the chain is Lumenal; sequence FGNTVNWRGRLFYIHWDTTVDAVEPREERTREVRTPELERGPSRNKHRVD. Positions 503-528 are disordered; that stretch reads PREERTREVRTPELERGPSRNKHRVD.

This sequence belongs to the glycosyltransferase 2 family.

Its subcellular location is the golgi apparatus membrane. It catalyses the reaction an N-acylsphing-4-enine + UDP-alpha-D-glucose = a beta-D-glucosyl-(1&lt;-&gt;1')-N-acylsphing-4-enine + UDP + H(+). The protein operates within lipid metabolism; sphingolipid metabolism. Its function is as follows. Catalyzes the final step in the biosynthesis of the membrane lipid glucosylceramide (GluCer), the transfer of glucose to ceramide. Glucosylceramides play important roles in growth, differentiation and pathogenicity. Contribution to fungal pathogenesis is host-dependent. This is Ceramide glucosyltransferase from Gibberella zeae (strain ATCC MYA-4620 / CBS 123657 / FGSC 9075 / NRRL 31084 / PH-1) (Wheat head blight fungus).